Here is a 433-residue protein sequence, read N- to C-terminus: Trigger factor (433 aa).

A PPIase FKBP-type domain is found at 161 to 246 (EDRATIDFTG…LKKVEERELP (86 aa)).

This sequence belongs to the FKBP-type PPIase family. Tig subfamily.

The protein resides in the cytoplasm. The enzyme catalyses [protein]-peptidylproline (omega=180) = [protein]-peptidylproline (omega=0). Involved in protein export. Acts as a chaperone by maintaining the newly synthesized protein in an open conformation. Functions as a peptidyl-prolyl cis-trans isomerase. The protein is Trigger factor of Edwardsiella ictaluri (strain 93-146).